Here is a 126-residue protein sequence, read N- to C-terminus: MARVSGVDIPREKRVEVALTYVFGIGRTLSQKTLAETGVNPNTRVRDLSEEELVRIREYVDNNFKTEGDLRREVQADIRRKVEIGCYQGLRHRRGLPVHGQRTSTNARTRKGPRRAIAGKKKPGKK.

The segment at 94–126 is disordered; that stretch reads RGLPVHGQRTSTNARTRKGPRRAIAGKKKPGKK. The span at 108-126 shows a compositional bias: basic residues; sequence RTRKGPRRAIAGKKKPGKK.

It belongs to the universal ribosomal protein uS13 family. As to quaternary structure, part of the 30S ribosomal subunit. Forms a loose heterodimer with protein S19. Forms two bridges to the 50S subunit in the 70S ribosome.

Its function is as follows. Located at the top of the head of the 30S subunit, it contacts several helices of the 16S rRNA. In the 70S ribosome it contacts the 23S rRNA (bridge B1a) and protein L5 of the 50S subunit (bridge B1b), connecting the 2 subunits; these bridges are implicated in subunit movement. Contacts the tRNAs in the A and P-sites. The sequence is that of Small ribosomal subunit protein uS13 from Streptomyces avermitilis (strain ATCC 31267 / DSM 46492 / JCM 5070 / NBRC 14893 / NCIMB 12804 / NRRL 8165 / MA-4680).